The chain runs to 466 residues: Histidine--tRNA ligase (466 aa).

It belongs to the class-II aminoacyl-tRNA synthetase family. Homodimer.

It is found in the cytoplasm. The enzyme catalyses tRNA(His) + L-histidine + ATP = L-histidyl-tRNA(His) + AMP + diphosphate + H(+). The sequence is that of Histidine--tRNA ligase from Xylella fastidiosa (strain M12).